The sequence spans 546 residues: Putative serine hydroxymethyltransferase, mitochondrial (546 aa).

The transit peptide at 1–64 (MSSFQSTAAV…RFSSSSIAND (64 aa)) directs the protein to the mitochondrion. Position 305 is an N6-(pyridoxal phosphate)lysine (lysine 305).

This sequence belongs to the SHMT family. Homotetramer. Pyridoxal 5'-phosphate serves as cofactor.

It is found in the mitochondrion. It catalyses the reaction (6R)-5,10-methylene-5,6,7,8-tetrahydrofolate + glycine + H2O = (6S)-5,6,7,8-tetrahydrofolate + L-serine. It functions in the pathway one-carbon metabolism; tetrahydrofolate interconversion. Interconversion of serine and glycine. This is Putative serine hydroxymethyltransferase, mitochondrial (cbs-2) from Neurospora crassa (strain ATCC 24698 / 74-OR23-1A / CBS 708.71 / DSM 1257 / FGSC 987).